Reading from the N-terminus, the 58-residue chain is Small ribosomal subunit protein bS21 (58 aa).

The tract at residues Arg-36 to Arg-58 is disordered. Residues Tyr-45–Arg-58 are compositionally biased toward basic residues.

The protein belongs to the bacterial ribosomal protein bS21 family.

The polypeptide is Small ribosomal subunit protein bS21 (Prochlorococcus marinus (strain NATL1A)).